The following is a 383-amino-acid chain: Small ribosomal subunit protein mS31 (383 aa).

A mitochondrion-targeting transit peptide spans 1-21 (MLRSLCSIAVRLGGARQPRLL). A coiled-coil region spans residues 158-187 (VNEAQIKLQEQRKALLNDVREKVEQEEVEE).

It belongs to the mitochondrion-specific ribosomal protein mS31 family. Component of the mitochondrial ribosome small subunit (28S) which comprises a 12S rRNA and about 30 distinct proteins.

It is found in the mitochondrion. The polypeptide is Small ribosomal subunit protein mS31 (mrps-31) (Caenorhabditis elegans).